Here is a 399-residue protein sequence, read N- to C-terminus: Probable tRNA sulfurtransferase (399 aa).

In terms of domain architecture, THUMP spans 60–165 (YAVMERLKRV…TEGTYISCET (106 aa)). ATP is bound by residues 183 to 184 (LL), 208 to 209 (HF), arginine 265, glycine 287, and glutamine 296.

The protein belongs to the ThiI family.

The protein resides in the cytoplasm. The enzyme catalyses [ThiI sulfur-carrier protein]-S-sulfanyl-L-cysteine + a uridine in tRNA + 2 reduced [2Fe-2S]-[ferredoxin] + ATP + H(+) = [ThiI sulfur-carrier protein]-L-cysteine + a 4-thiouridine in tRNA + 2 oxidized [2Fe-2S]-[ferredoxin] + AMP + diphosphate. The catalysed reaction is [ThiS sulfur-carrier protein]-C-terminal Gly-Gly-AMP + S-sulfanyl-L-cysteinyl-[cysteine desulfurase] + AH2 = [ThiS sulfur-carrier protein]-C-terminal-Gly-aminoethanethioate + L-cysteinyl-[cysteine desulfurase] + A + AMP + 2 H(+). Its pathway is cofactor biosynthesis; thiamine diphosphate biosynthesis. Functionally, catalyzes the ATP-dependent transfer of a sulfur to tRNA to produce 4-thiouridine in position 8 of tRNAs, which functions as a near-UV photosensor. Also catalyzes the transfer of sulfur to the sulfur carrier protein ThiS, forming ThiS-thiocarboxylate. This is a step in the synthesis of thiazole, in the thiamine biosynthesis pathway. The sulfur is donated as persulfide by IscS. The sequence is that of Probable tRNA sulfurtransferase from Brevibacillus brevis (strain 47 / JCM 6285 / NBRC 100599).